The following is a 257-amino-acid chain: Isoprenyl transferase (257 aa).

The active site involves aspartate 33. Aspartate 33 is a Mg(2+) binding site. Substrate is bound by residues glycine 34–arginine 37, tryptophan 38, arginine 46, histidine 50, and serine 78–glutamate 80. The Proton acceptor role is filled by asparagine 81. Residues tryptophan 82, arginine 84, arginine 204, and arginine 210–serine 212 each bind substrate. A Mg(2+)-binding site is contributed by glutamate 223.

The protein belongs to the UPP synthase family. In terms of assembly, homodimer. Mg(2+) serves as cofactor.

In terms of biological role, catalyzes the condensation of isopentenyl diphosphate (IPP) with allylic pyrophosphates generating different type of terpenoids. This chain is Isoprenyl transferase, found in Clostridium acetobutylicum (strain ATCC 824 / DSM 792 / JCM 1419 / IAM 19013 / LMG 5710 / NBRC 13948 / NRRL B-527 / VKM B-1787 / 2291 / W).